We begin with the raw amino-acid sequence, 1432 residues long: uncharacterized protein (1432 aa).

9 disordered regions span residues 1-72 (MDTI…NYYN), 208-237 (NKIENNNNNNNNKINNENNNEKNKNNNNGQ), 280-335 (ERNE…ENNL), 531-607 (IVKS…NNSS), 690-712 (QNKSPLISPSLSKSNTTTTTTTT), 738-801 (NNTL…NGGR), 896-950 (QSNN…SPPT), 1044-1076 (NINSNSNNNNNNNNNNNNNNNNNNNNYNNNNNN), and 1303-1359 (NNNN…NTTP). Low complexity-rich tracts occupy residues 14–72 (INNN…NYYN), 208–225 (NKIENNNNNNNNKINNEN), and 284–300 (LTSPASSLPSLPSLPSS). Acidic residues predominate over residues 315–325 (QEEEEEEEEED). 5 stretches are compositionally biased toward low complexity: residues 536–575 (SSSNLNKINQNNQNNNNNNIINNNNNNNNQNNTTTNNKNK), 583–607 (DNNTVFNNNTTTTNNNNNNNNNNSS), 691–712 (NKSPLISPSLSKSNTTTTTTTT), 744–779 (NMNNNNNNNNNNNNNNNNNNNNNNNNNNNNNNNSNN), and 896–944 (QSNN…SSSN). Positions 1311–1320 (NGNGNGGING) are enriched in gly residues. Over residues 1321–1333 (NNGNNSGSNNKEN) the composition is skewed to low complexity. The segment covering 1334 to 1346 (GGTGAGIGGGGGL) has biased composition (gly residues). The span at 1347 to 1359 (QLPNNNNNNNTTP) shows a compositional bias: low complexity.

This is an uncharacterized protein from Dictyostelium discoideum (Social amoeba).